A 66-amino-acid polypeptide reads, in one-letter code: UPF0337 protein BP1738 (66 aa).

Belongs to the UPF0337 (CsbD) family.

This chain is UPF0337 protein BP1738, found in Bordetella pertussis (strain Tohama I / ATCC BAA-589 / NCTC 13251).